The following is a 200-amino-acid chain: MARYTGSVWKKSRRLGISLTGTGKELDKRPYAPGQHGPNQRRKLSEYGLQMQEKQKLRFMYGLNERQFRTLFDKAGKMKGIHGENFMILLESRLDNLVYRLGLARTRRQARQLVNHGHVTVDGGRVDIPSYAIKPGQVIGLREKSKNLDVVKEALEANSFVPEYTSFDADKMEGSYTRFPERSELPAEINEQLIVEFYSR.

The segment at 20 to 41 is disordered; that stretch reads TGTGKELDKRPYAPGQHGPNQR. Positions 92 to 152 constitute an S4 RNA-binding domain; the sequence is SRLDNLVYRL…EKSKNLDVVK (61 aa).

The protein belongs to the universal ribosomal protein uS4 family. Part of the 30S ribosomal subunit. Contacts protein S5. The interaction surface between S4 and S5 is involved in control of translational fidelity.

Functionally, one of the primary rRNA binding proteins, it binds directly to 16S rRNA where it nucleates assembly of the body of the 30S subunit. Its function is as follows. With S5 and S12 plays an important role in translational accuracy. The sequence is that of Small ribosomal subunit protein uS4 from Oceanobacillus iheyensis (strain DSM 14371 / CIP 107618 / JCM 11309 / KCTC 3954 / HTE831).